The following is a 168-amino-acid chain: Sec-independent protein translocase protein TatB (168 aa).

A helical transmembrane segment spans residues 1 to 21; it reads MIDLGISKLALIGAVALIVIG.

Belongs to the TatB family. The Tat system comprises two distinct complexes: a TatABC complex, containing multiple copies of TatA, TatB and TatC subunits, and a separate TatA complex, containing only TatA subunits. Substrates initially bind to the TatABC complex, which probably triggers association of the separate TatA complex to form the active translocon.

Its subcellular location is the cell inner membrane. Part of the twin-arginine translocation (Tat) system that transports large folded proteins containing a characteristic twin-arginine motif in their signal peptide across membranes. Together with TatC, TatB is part of a receptor directly interacting with Tat signal peptides. TatB may form an oligomeric binding site that transiently accommodates folded Tat precursor proteins before their translocation. This Cupriavidus pinatubonensis (strain JMP 134 / LMG 1197) (Cupriavidus necator (strain JMP 134)) protein is Sec-independent protein translocase protein TatB.